The following is a 356-amino-acid chain: Alanine racemase (356 aa).

Residue K34 is the Proton acceptor; specific for D-alanine of the active site. K34 carries the N6-(pyridoxal phosphate)lysine modification. Substrate is bound at residue R129. Residue Y253 is the Proton acceptor; specific for L-alanine of the active site. M301 provides a ligand contact to substrate.

The protein belongs to the alanine racemase family. Requires pyridoxal 5'-phosphate as cofactor.

It carries out the reaction L-alanine = D-alanine. Its pathway is amino-acid biosynthesis; D-alanine biosynthesis; D-alanine from L-alanine: step 1/1. Its function is as follows. Catalyzes the interconversion of L-alanine and D-alanine. May also act on other amino acids. The polypeptide is Alanine racemase (alr) (Nitrosococcus oceani (strain ATCC 19707 / BCRC 17464 / JCM 30415 / NCIMB 11848 / C-107)).